A 306-amino-acid polypeptide reads, in one-letter code: Putative syntaxin-3 (306 aa).

Residues 1–279 are Cytoplasmic-facing; the sequence is MPRDRLKELQ…QKRARKMKVC (279 aa). The tract at residues 40–180 is required for the regulation of the defecation motor program; it reads QDADFEMFLE…QLSDEEIENA (141 aa). The t-SNARE coiled-coil homology domain occupies 204–266; that stretch reads YDEVKSRADE…KQARGNVEEA (63 aa). Residues 280–300 traverse the membrane as a helical; Anchor for type IV membrane protein segment; it reads IIIGSIIAVLILILFIQSAVC. The Extracellular portion of the chain corresponds to 301 to 306; sequence HFTPIC.

This sequence belongs to the syntaxin family. As to expression, expressed in body wall, pharyngeal, vulval and enteric muscles and in some head neurons.

The protein localises to the cell membrane. Functionally, potentially involved in docking of synaptic vesicles at presynaptic active zones. Acts in the intestine to regulate anterior body muscle contractions (aBOC) and the expulsion steps during the defecation motor program (DMP). The sequence is that of Putative syntaxin-3 from Caenorhabditis elegans.